The chain runs to 203 residues: Monothiol glutaredoxin-7 (203 aa).

Residues methionine 1 to alanine 32 form the signal peptide. A Glutaredoxin domain is found at alanine 88–alanine 191. A [2Fe-2S] cluster-binding site is contributed by cysteine 108.

This sequence belongs to the glutaredoxin family. Monothiol subfamily.

This chain is Monothiol glutaredoxin-7 (GRX7), found in Saccharomyces cerevisiae (strain ATCC 204508 / S288c) (Baker's yeast).